A 2596-amino-acid polypeptide reads, in one-letter code: Protein unc-79 homolog (2596 aa).

S754 and S758 each carry phosphoserine. Disordered stretches follow at residues 907–931 (GPEGEEEENPAAKHGENPGNRTVPS), 1539–1573 (SQRQNDHHGRSRQNSATRPDNTEIPKNPGTEGFQE), 1594–1632 (VDSPGKPAPREDLDLIDLSSDSTSGPEKHSILSTSDSDS), 1648–1679 (EEEEMMNQGNGGALGNNAASSPSIPSQPSVLS), 1695–1832 (KDFS…FKIQ), and 1863–1909 (LGEQ…KQIQ). Residues 1594-1606 (VDSPGKPAPREDL) are compositionally biased toward basic and acidic residues. The segment covering 1662-1679 (GNNAASSPSIPSQPSVLS) has biased composition (low complexity). Polar residues predominate over residues 1704 to 1713 (NHQSASNEDS). Positions 1726-1735 (ELSKSEELRE) are enriched in basic and acidic residues. Residues 1897 to 1908 (ETSSHSSISKQI) show a composition bias toward polar residues. 2 consecutive transmembrane segments (helical) span residues 2184-2204 (LLSFVIQNAVFTLAYLVELCG) and 2426-2446 (CVLHMCSLFHAFIFAQLWTVY).

It belongs to the unc-79 family. As to quaternary structure, NALCN complex consists of NALCN and auxiliary subunits, UNC79, UNC80 and NACL1. These auxiliary subunits are essential for the NALCN channel function. UNC80 bridges NALCN to UNC79. Interacts with NALCN. Interacts with UNC80.

The protein resides in the cell membrane. Auxiliary subunit of the NALCN sodium channel complex. The NALCN sodium channel complex is a voltage-gated ion channel responsible for the resting Na(+) permeability that controls neuronal excitability. Activated by neuropeptides substance P, neurotensin, and extracellular calcium that regulates neuronal excitability by controlling the sizes of NALCN-dependent sodium-leak current. This chain is Protein unc-79 homolog (Unc79), found in Mus musculus (Mouse).